Consider the following 122-residue polypeptide: Putative cryptic phosphonate transport system permease protein PhnE2 (122 aa).

One can recognise an ABC transmembrane type-1 domain in the interval 1 to 114 (MLALFIHTTG…VTVSLLDFLS (114 aa)). A run of 4 helical transmembrane segments spans residues 3 to 23 (ALFIHTTGVLSKLLSEAVEAI), 39 to 59 (LEEILYGVLPQVMPLLISYSL), 68 to 88 (SATVVGMVGAGGIGVTLWEAI), and 93 to 113 (FQQTCALMVLIIVTVSLLDFL).

It belongs to the binding-protein-dependent transport system permease family. If the reading frame is restored, the complex is composed of two ATP-binding proteins (PhnC), two transmembrane proteins (PhnE) and a solute-binding protein (PhnD).

The protein localises to the cell inner membrane. Functionally, C-terminal fragment of the PhnE protein, part of a phosphonate usage operon that is cryptic in K12 strains. Growth of K12 strains on phosphonate can be observed when it is used as the sole phosphorus source after a 60 hour lag period, suggesting the operon is activated. An intact PhnE in strain B is (AC A0A140NFA3). Part of the binding-protein-dependent transport system for phosphonates; probably responsible for the translocation of the substrate across the membrane. The sequence is that of Putative cryptic phosphonate transport system permease protein PhnE2 (phnE) from Escherichia coli (strain K12).